Consider the following 730-residue polypeptide: Trimethylamine dehydrogenase (730 aa).

Positions 29, 31, 61, and 104 each coordinate FMN. Position 31 is an S-6-FMN cysteine (Cys31). 170-173 (YGAH) contacts substrate. Catalysis depends on Tyr175, which acts as the Proton donor. FMN-binding residues include Arg223, Asp268, Arg300, Ala322, and Arg323. [4Fe-4S] cluster is bound by residues Cys346, Cys349, Cys352, and Cys365. Residues Ser401, Asp420, Thr421, His428, Met471, and Asp675 each coordinate ADP.

The protein in the N-terminal section; belongs to the NADH:flavin oxidoreductase/NADH oxidase family. Homodimer. Forms a ternary complex with the heterodimeric electron transfer flavoprotein. The cofactor is FMN. It depends on [4Fe-4S] cluster as a cofactor.

The enzyme catalyses trimethylamine + oxidized [electron-transfer flavoprotein] + H2O + H(+) = dimethylamine + reduced [electron-transfer flavoprotein] + formaldehyde. This Methylophilus methylotrophus (Bacterium W3A1) protein is Trimethylamine dehydrogenase.